A 292-amino-acid polypeptide reads, in one-letter code: Small ribosomal subunit biogenesis GTPase RsgA (292 aa).

Residues 64–221 (RSELFRPAVA…LVDTPGFSSL (158 aa)) form the CP-type G domain. GTP is bound by residues 113-116 (NKMD) and 164-172 (GPSGVGKST). Zn(2+)-binding residues include Cys245, Cys250, His252, and Cys258.

Belongs to the TRAFAC class YlqF/YawG GTPase family. RsgA subfamily. Monomer. Associates with 30S ribosomal subunit, binds 16S rRNA. Zn(2+) serves as cofactor.

It is found in the cytoplasm. Functionally, one of several proteins that assist in the late maturation steps of the functional core of the 30S ribosomal subunit. Helps release RbfA from mature subunits. May play a role in the assembly of ribosomal proteins into the subunit. Circularly permuted GTPase that catalyzes slow GTP hydrolysis, GTPase activity is stimulated by the 30S ribosomal subunit. The polypeptide is Small ribosomal subunit biogenesis GTPase RsgA (Clostridium botulinum (strain Okra / Type B1)).